Reading from the N-terminus, the 1200-residue chain is Nuclear pore complex protein Nup133 (1200 aa).

The interval 1–28 (MERNLQKQLYGISRESSPGARRYSMPAA) is disordered.

Belongs to the nucleoporin Nup133 family. As to quaternary structure, forms part of the Nup107-Nup160 subcomplex in the nuclear pore.

It localises to the nucleus. Its subcellular location is the nuclear pore complex. Probable component of the nuclear pore complex (NPC). Plays a role in NPC assembly and/or maintenance. The protein is Nuclear pore complex protein Nup133 of Drosophila melanogaster (Fruit fly).